The primary structure comprises 381 residues: Queuine tRNA-ribosyltransferase (381 aa).

Asp-96 acts as the Proton acceptor in catalysis. Residues 96–100, Asp-150, Gln-193, and Gly-220 contribute to the substrate site; that span reads DSGGF. The tract at residues 251 to 257 is RNA binding; sequence GVGSPDA. Asp-270 acts as the Nucleophile in catalysis. The interval 275–279 is RNA binding; important for wobble base 34 recognition; the sequence is TRIAR. Cys-308, Cys-310, Cys-313, and His-339 together coordinate Zn(2+).

This sequence belongs to the queuine tRNA-ribosyltransferase family. Homodimer. Within each dimer, one monomer is responsible for RNA recognition and catalysis, while the other monomer binds to the replacement base PreQ1. Zn(2+) serves as cofactor.

The catalysed reaction is 7-aminomethyl-7-carbaguanine + guanosine(34) in tRNA = 7-aminomethyl-7-carbaguanosine(34) in tRNA + guanine. It participates in tRNA modification; tRNA-queuosine biosynthesis. Functionally, catalyzes the base-exchange of a guanine (G) residue with the queuine precursor 7-aminomethyl-7-deazaguanine (PreQ1) at position 34 (anticodon wobble position) in tRNAs with GU(N) anticodons (tRNA-Asp, -Asn, -His and -Tyr). Catalysis occurs through a double-displacement mechanism. The nucleophile active site attacks the C1' of nucleotide 34 to detach the guanine base from the RNA, forming a covalent enzyme-RNA intermediate. The proton acceptor active site deprotonates the incoming PreQ1, allowing a nucleophilic attack on the C1' of the ribose to form the product. After dissociation, two additional enzymatic reactions on the tRNA convert PreQ1 to queuine (Q), resulting in the hypermodified nucleoside queuosine (7-(((4,5-cis-dihydroxy-2-cyclopenten-1-yl)amino)methyl)-7-deazaguanosine). The chain is Queuine tRNA-ribosyltransferase from Bacillus subtilis (strain 168).